A 373-amino-acid chain; its full sequence is MLIIIRPSGEIALKSPRSRRNFEHTLANNIRSVIKEGKIWRSQGVLFLEVNDNNKNIEELSKVFGIASFSPVMSIKSYNNNLEDIINKAKEVFAEIVKGKIFSVRAKRIGSHNFTSLDVQRKVGEALYPFSRGVNLENPEVEVFIEIRNDVAYFYYKIIKGPRGLPVGVAGKTVVLFSGGIDSPVATWMMMKRGSIPVILNFNLGGSVHRKFVLEELSVLRKWSGGHKLKLFIVNGTDVLIKLSQIEKRNRVVMLKRVMYKVAERLCDKANAKSITTGESLSQVSSQTMTNLYVTEYGIKYPIFRPLIGFDKEEIVELARKIGTYEYSIKLPEYCAISTKARTSVELDEVLKDEENLNIDYEKVLENSEVIEI.

Residues 54–158 (NKNIEELSKV…NDVAYFYYKI (105 aa)) enclose the THUMP domain. ATP contacts are provided by residues 176–177 (LF), 201–202 (NF), Lys256, Gly278, and Gln287.

This sequence belongs to the ThiI family.

The protein resides in the cytoplasm. The enzyme catalyses [ThiI sulfur-carrier protein]-S-sulfanyl-L-cysteine + a uridine in tRNA + 2 reduced [2Fe-2S]-[ferredoxin] + ATP + H(+) = [ThiI sulfur-carrier protein]-L-cysteine + a 4-thiouridine in tRNA + 2 oxidized [2Fe-2S]-[ferredoxin] + AMP + diphosphate. It catalyses the reaction [ThiS sulfur-carrier protein]-C-terminal Gly-Gly-AMP + S-sulfanyl-L-cysteinyl-[cysteine desulfurase] + AH2 = [ThiS sulfur-carrier protein]-C-terminal-Gly-aminoethanethioate + L-cysteinyl-[cysteine desulfurase] + A + AMP + 2 H(+). It functions in the pathway cofactor biosynthesis; thiamine diphosphate biosynthesis. Its function is as follows. Catalyzes the ATP-dependent transfer of a sulfur to tRNA to produce 4-thiouridine in position 8 of tRNAs, which functions as a near-UV photosensor. Also catalyzes the transfer of sulfur to the sulfur carrier protein ThiS, forming ThiS-thiocarboxylate. This is a step in the synthesis of thiazole, in the thiamine biosynthesis pathway. The sulfur is donated as persulfide by IscS. The sequence is that of Probable tRNA sulfurtransferase from Saccharolobus islandicus (strain Y.N.15.51 / Yellowstone #2) (Sulfolobus islandicus).